A 517-amino-acid chain; its full sequence is Crotonobetaine/carnitine--CoA ligase (517 aa).

The protein belongs to the ATP-dependent AMP-binding enzyme family.

The catalysed reaction is 4-(trimethylamino)butanoate + ATP + CoA = 4-(trimethylamino)butanoyl-CoA + AMP + diphosphate. The enzyme catalyses crotonobetaine + ATP + CoA = crotonobetainyl-CoA + AMP + diphosphate. It catalyses the reaction (R)-carnitine + ATP + CoA = (R)-carnitinyl-CoA + AMP + diphosphate. Its pathway is amine and polyamine metabolism; carnitine metabolism. Its function is as follows. Catalyzes the transfer of CoA to carnitine, generating the initial carnitinyl-CoA needed for the CaiB reaction cycle. Also has activity toward crotonobetaine and gamma-butyrobetaine. This is Crotonobetaine/carnitine--CoA ligase from Salmonella heidelberg (strain SL476).